An 82-amino-acid chain; its full sequence is Small ribosomal subunit protein bS18 (82 aa).

The tract at residues 1–21 is disordered; that stretch reads MKRNNSKKVRVEPTRRPKKNP.

This sequence belongs to the bacterial ribosomal protein bS18 family. Part of the 30S ribosomal subunit. Forms a tight heterodimer with protein bS6.

In terms of biological role, binds as a heterodimer with protein bS6 to the central domain of the 16S rRNA, where it helps stabilize the platform of the 30S subunit. In Corynebacterium kroppenstedtii (strain DSM 44385 / JCM 11950 / CIP 105744 / CCUG 35717), this protein is Small ribosomal subunit protein bS18.